We begin with the raw amino-acid sequence, 651 residues long: Peptide-N(4)-(N-acetyl-beta-glucosaminyl)asparagine amidase (651 aa).

Position 2 is an N-acetylalanine (Ala2). One can recognise a PUB domain in the interval 30–91 (EASKLLLTYA…EGETHLIFPK (62 aa)). Zn(2+) is bound by residues Cys247, Cys250, Cys280, and Cys283. Cys306 serves as the catalytic Nucleophile. Residues His333 and Asp350 contribute to the active site. A PAW domain is found at 451–651 (ELGGRVSGSL…LEIIITFNDL (201 aa)).

This sequence belongs to the transglutaminase-like superfamily. PNGase family. In terms of assembly, component of a complex required to couple retrotranslocation, ubiquitination and deglycosylation composed of NGLY1, SAKS1, AMFR, VCP and RAD23B. Interacts with the proteasome components RAD23B and PSMC1. Interacts with directly with VCP. Interacts with DERL1, bringing it close to the endoplasmic reticulum membrane. Interacts with SAKS1. The cofactor is Zn(2+). In terms of tissue distribution, ubiquitously expressed with highest level in testis.

The protein resides in the cytoplasm. It carries out the reaction Hydrolysis of an N(4)-(acetyl-beta-D-glucosaminyl)asparagine residue in which the glucosamine residue may be further glycosylated, to yield a (substituted) N-acetyl-beta-D-glucosaminylamine and a peptide containing an aspartate residue.. With respect to regulation, inhibited by Z-VAD-fmk, a well-known caspase inhibitor, which inhibits enzyme activity through covalent binding of the carbohydrate to the single Cys-306 residue. In terms of biological role, specifically deglycosylates the denatured form of N-linked glycoproteins in the cytoplasm and assists their proteasome-mediated degradation. Cleaves the beta-aspartyl-glucosamine (GlcNAc) of the glycan and the amide side chain of Asn, converting Asn to Asp. Prefers proteins containing high-mannose over those bearing complex type oligosaccharides. Can recognize misfolded proteins in the endoplasmic reticulum that are exported to the cytosol to be destroyed and deglycosylate them, while it has no activity toward native proteins. Deglycosylation is a prerequisite for subsequent proteasome-mediated degradation of some, but not all, misfolded glycoproteins. This chain is Peptide-N(4)-(N-acetyl-beta-glucosaminyl)asparagine amidase (Ngly1), found in Mus musculus (Mouse).